Consider the following 602-residue polypeptide: Potassium-transporting ATPase potassium-binding subunit (602 aa).

10 helical membrane passes run 3–23 (ANNL…AVPV), 64–84 (QYAL…YALL), 135–155 (GLTV…LALI), 178–198 (LYVL…QGVI), 282–302 (FSNF…CLVF), 313–333 (VAVL…ETSA), 418–438 (GLYG…LMIG), 456–476 (VSIV…IAVL), 522–542 (WMTA…VLAI), and 565–585 (LFVV…YMPA).

Belongs to the KdpA family. The system is composed of three essential subunits: KdpA, KdpB and KdpC.

It is found in the cell inner membrane. Its function is as follows. Part of the high-affinity ATP-driven potassium transport (or Kdp) system, which catalyzes the hydrolysis of ATP coupled with the electrogenic transport of potassium into the cytoplasm. This subunit binds the periplasmic potassium ions and delivers the ions to the membrane domain of KdpB through an intramembrane tunnel. The polypeptide is Potassium-transporting ATPase potassium-binding subunit (Burkholderia mallei (strain ATCC 23344)).